The following is a 536-amino-acid chain: Putative cysteine ligase BshC (536 aa).

The protein belongs to the BshC family.

Involved in bacillithiol (BSH) biosynthesis. May catalyze the last step of the pathway, the addition of cysteine to glucosamine malate (GlcN-Mal) to generate BSH. The polypeptide is Putative cysteine ligase BshC (Anoxybacillus flavithermus (strain DSM 21510 / WK1)).